The primary structure comprises 102 residues: UPF0751 protein DSY4013 (102 aa).

The protein belongs to the UPF0751 family.

This is UPF0751 protein DSY4013 from Desulfitobacterium hafniense (strain Y51).